Reading from the N-terminus, the 388-residue chain is Riboflavin biosynthesis protein RibBA (388 aa).

The DHBP synthase stretch occupies residues 1–186 (MEELREAFEE…MDDVWREFVK (186 aa)). D-ribulose 5-phosphate is bound by residues 21-22 (RE), D26, 125-129 (RKGHT), and E149. E22 is a Mg(2+) binding site. Residue H128 coordinates Mg(2+). The interval 187 to 388 (RKLLMKKKAE…LEEIFREVNS (202 aa)) is GTP cyclohydrolase II. A GTP-binding site is contributed by 235 to 239 (RIHSE). Zn(2+) is bound by residues C240, C251, and C253. Residues Q256, 277 to 279 (EGR), and T299 contribute to the GTP site. Catalysis depends on D311, which acts as the Proton acceptor; for GTP cyclohydrolase activity. R313 serves as the catalytic Nucleophile; for GTP cyclohydrolase activity. GTP is bound by residues T334 and K339.

It in the N-terminal section; belongs to the DHBP synthase family. This sequence in the C-terminal section; belongs to the GTP cyclohydrolase II family. Requires Mg(2+) as cofactor. The cofactor is Mn(2+). It depends on Zn(2+) as a cofactor.

The enzyme catalyses D-ribulose 5-phosphate = (2S)-2-hydroxy-3-oxobutyl phosphate + formate + H(+). It carries out the reaction GTP + 4 H2O = 2,5-diamino-6-hydroxy-4-(5-phosphoribosylamino)-pyrimidine + formate + 2 phosphate + 3 H(+). It participates in cofactor biosynthesis; riboflavin biosynthesis; 2-hydroxy-3-oxobutyl phosphate from D-ribulose 5-phosphate: step 1/1. It functions in the pathway cofactor biosynthesis; riboflavin biosynthesis; 5-amino-6-(D-ribitylamino)uracil from GTP: step 1/4. In terms of biological role, catalyzes the conversion of D-ribulose 5-phosphate to formate and 3,4-dihydroxy-2-butanone 4-phosphate. Its function is as follows. Catalyzes the conversion of GTP to 2,5-diamino-6-ribosylamino-4(3H)-pyrimidinone 5'-phosphate (DARP), formate and pyrophosphate. This chain is Riboflavin biosynthesis protein RibBA, found in Thermotoga maritima (strain ATCC 43589 / DSM 3109 / JCM 10099 / NBRC 100826 / MSB8).